Reading from the N-terminus, the 556-residue chain is CDP-diacylglycerol--glycerol-3-phosphate 3-phosphatidyltransferase, mitochondrial (556 aa).

The transit peptide at 1 to 28 (MAAAAAAAAGPVFWRRLLGLLPGRPGLA) directs the protein to the mitochondrion. Residue Ser-49 is modified to Phosphoserine. 124 to 131 (ASLYLGIG) is an ATP binding site. 2 consecutive PLD phosphodiesterase domains span residues 215 to 241 (TIGLQHIKVYLFDNNVILSGANLSDSY) and 419 to 457 (FGAKGVAGAIPAAYVHIERQFYSEVCSLGQQERVQLQEY). Catalysis depends on residues His-220, Lys-222, and Asp-227.

This sequence belongs to the CDP-alcohol phosphatidyltransferase class-II family.

It localises to the mitochondrion. It catalyses the reaction a CDP-1,2-diacyl-sn-glycerol + sn-glycerol 3-phosphate = a 1,2-diacyl-sn-glycero-3-phospho-(1'-sn-glycero-3'-phosphate) + CMP + H(+). Its pathway is phospholipid metabolism; phosphatidylglycerol biosynthesis; phosphatidylglycerol from CDP-diacylglycerol: step 1/2. Activated by calcium and magnesium and inhibited by other bivalent cations. In terms of biological role, functions in the biosynthesis of the anionic phospholipids phosphatidylglycerol and cardiolipin. The protein is CDP-diacylglycerol--glycerol-3-phosphate 3-phosphatidyltransferase, mitochondrial (PGS1) of Bos taurus (Bovine).